The sequence spans 374 residues: tRNA-specific 2-thiouridylase MnmA (374 aa).

ATP-binding positions include 8-15 (GLSGGVDS) and M34. The interval 104–106 (NPD) is interaction with target base in tRNA. C109 (nucleophile) is an active-site residue. Residues C109 and C208 are joined by a disulfide bond. G134 is a binding site for ATP. The tract at residues 158-160 (KDQ) is interaction with tRNA. Catalysis depends on C208, which acts as the Cysteine persulfide intermediate. Residues 321-322 (RY) are interaction with tRNA.

It belongs to the MnmA/TRMU family.

Its subcellular location is the cytoplasm. The enzyme catalyses S-sulfanyl-L-cysteinyl-[protein] + uridine(34) in tRNA + AH2 + ATP = 2-thiouridine(34) in tRNA + L-cysteinyl-[protein] + A + AMP + diphosphate + H(+). Its function is as follows. Catalyzes the 2-thiolation of uridine at the wobble position (U34) of tRNA, leading to the formation of s(2)U34. This Mesoplasma florum (strain ATCC 33453 / NBRC 100688 / NCTC 11704 / L1) (Acholeplasma florum) protein is tRNA-specific 2-thiouridylase MnmA.